Consider the following 576-residue polypeptide: Vacuolar protein sorting-associated protein vps5 (576 aa).

Disordered stretches follow at residues methionine 1–arginine 60 and aspartate 156–serine 198. Threonine 55 carries the post-translational modification Phosphothreonine. A compositionally biased stretch (polar residues) spans aspartate 156–valine 169. Positions serine 170–serine 181 are enriched in low complexity. The PX domain maps to threonine 200–aspartate 317. A 1,2-diacyl-sn-glycero-3-phospho-(1D-myo-inositol-3-phosphate) is bound by residues arginine 244, lysine 270, and arginine 284. Position 332 is a phosphoserine (serine 332).

This sequence belongs to the sorting nexin family. In terms of assembly, component of the retromer complex which consists of vps29, vps26, vps35, vps5 and vps17.

It localises to the cytoplasm. It is found in the golgi apparatus. The protein localises to the membrane. In terms of biological role, required for efficient sporulation target of PtdIns(3)P in vesicle transport required for onset of the forespore membrane formation. Functionally, plays a role in vesicular protein sorting. Required for the endosome-to-Golgi retrieval of the vacuolar protein sorting receptor pep1/vps10. Component of the membrane-associated retromer complex which is essential in endosome-to-Golgi retrograde transport. The vps29-vps26-vps35 subcomplex may be involved in cargo selection. The chain is Vacuolar protein sorting-associated protein vps5 (vps5) from Schizosaccharomyces pombe (strain 972 / ATCC 24843) (Fission yeast).